A 296-amino-acid chain; its full sequence is MKIRVATRGSKLSLIQTEELLAQIKAVEPDIRFEIVVVKTTGDLIQDKPLFQIGVKGVFEKEVNLAVLRGEADMAVHSLKDLPSDLTPGLALAGYSRRAPPNDALVSPRGYTLETLPRGAVVGTSSVRRAEFLKAARPDLEIKPLRGNVDTRVAKILSGQYDAAVMAAAGLQRLYGGAPPIPAVPLAVEDLPPPPGQGIVAAVAREEDTWLTDLLRRASDRKAAAEAAAERAFLAEVGAGCHVAVGGIARQTPAGIEFTAGYAQGGRKHLVKVYGEDPTEVGRRAARLVAQAMKKT.

C241 is subject to S-(dipyrrolylmethanemethyl)cysteine.

The protein belongs to the HMBS family. Dipyrromethane serves as cofactor.

It catalyses the reaction 4 porphobilinogen + H2O = hydroxymethylbilane + 4 NH4(+). It functions in the pathway porphyrin-containing compound metabolism; protoporphyrin-IX biosynthesis; coproporphyrinogen-III from 5-aminolevulinate: step 2/4. Functionally, tetrapolymerization of the monopyrrole PBG into the hydroxymethylbilane pre-uroporphyrinogen in several discrete steps. The polypeptide is Probable porphobilinogen deaminase (Pyrobaculum neutrophilum (strain DSM 2338 / JCM 9278 / NBRC 100436 / V24Sta) (Thermoproteus neutrophilus)).